The following is a 64-amino-acid chain: Small hydrophobic protein (64 aa).

The segment at 6–15 is interaction with host BCAP31; that stretch reads ITIEFSSKFW. The chain crosses the membrane as a helical span at residues 20–40; that stretch reads LIHMITTIISLLIIISIMTAI. Residues 38–43 form an interaction with small-molecule inhibitor region; sequence TAILNK. A glycan (N-linked (GlcNAc...) asparagine; by host) is linked at Asn52.

This sequence belongs to the orthopneumovirus small hydrophobic protein family. Homopentamer forming a funnel-like pore. Interacts with glycoprotein G; this interaction occurs on the surface of virion particles and infected cells. Interacts with host BCAP31 (via C-terminus); this interaction is direct. In terms of processing, four species of SH have been detected in infected cell cytoplasm: a 7.5 kDa non-glycosylated form (SH0), a 13-15 kDa form that contains one or two N-linked carbohydrate side chains of the high-mannose type (SHg), a 21-30 kDa polylactosaminoglycan-modified form of the protein (SHp), and the isoform generated by alternative translational initiation. Of these different forms, SH0 is by far the most abundant protein detected during virus infection. Post-translationally, tyrosine phosphorylated.

The protein resides in the virion membrane. It localises to the host cell membrane. It is found in the host Golgi apparatus membrane. Its subcellular location is the host endoplasmic reticulum membrane. With respect to regulation, channel activity is inhibited by copper. Also inhibited by small-molecule pyronin B. Its function is as follows. Viroporin that forms a homopentameric ion channel displaying low ion selectivity. May play a role in virus morphogenesis and pathogenicity at various stages of the viral life cycle. Accumulates at the membrane of the Golgi apparatus in infected cells and may facilitate virus release by modifying the secretory pathway. May enhance host membrane permeability and disrupt cellular ion homeostasis, which can be sensed as damage-associated molecular patterns/danger signals, triggering NLRP3 inflammasome activation and inflammatory immune response. Also inhibits host TNFA-mediated signaling pathway and may delay apoptosis, allowing time for the virus to replicate. This Homo sapiens (Human) protein is Small hydrophobic protein (SH).